Reading from the N-terminus, the 237-residue chain is Zinc finger protein 22 (237 aa).

The interval 1–33 (MRLGKPKGGISRSASQGKTYESKRKTARQRQKW) is disordered. N6-acetyllysine occurs at positions 18 and 23. C2H2-type zinc fingers lie at residues 55–82 (YKCTKCSKSFSQSSTLFQHKKIHTGKKS), 83–110 (HKCADCGKSFFQSSNLIQHRRIHTGEKP), 111–138 (YKCDECGERFKQSSNLIQHQRIHTGEKP), 139–166 (YCCDECGRCFSQSSHLIQHQRTHTGEKP), and 167–194 (YQCEECDKCFSQSSHLRQHMKVHKEKKS). The span at 188-217 (VHKEKKSHKRGKNARAKTHPVSWKRGKGRK) shows a compositional bias: basic residues. The tract at residues 188-218 (VHKEKKSHKRGKNARAKTHPVSWKRGKGRKA) is disordered.

It belongs to the krueppel C2H2-type zinc-finger protein family. As to expression, highly expressed in the ameloblast layer of mandibular incisors, moderately expressed in submandibular gland, calvaria, kidney and lung, and expressed at low levels in brain and thymus.

Its subcellular location is the nucleus. Its function is as follows. Binds DNA through the consensus sequence 5'-CAATG-3'. May be involved in transcriptional regulation and may play a role in tooth formation. The chain is Zinc finger protein 22 (Znf22) from Rattus norvegicus (Rat).